A 224-amino-acid polypeptide reads, in one-letter code: Orotidine 5'-phosphate decarboxylase (224 aa).

Substrate is bound by residues D10, K32, 59-68 (DLKLHDIPNT), T115, R175, Q184, G204, and R205. The active-site Proton donor is K61.

It belongs to the OMP decarboxylase family. Type 1 subfamily. Homodimer.

The enzyme catalyses orotidine 5'-phosphate + H(+) = UMP + CO2. It participates in pyrimidine metabolism; UMP biosynthesis via de novo pathway; UMP from orotate: step 2/2. Catalyzes the decarboxylation of orotidine 5'-monophosphate (OMP) to uridine 5'-monophosphate (UMP). In Erythrobacter litoralis (strain HTCC2594), this protein is Orotidine 5'-phosphate decarboxylase.